Reading from the N-terminus, the 486-residue chain is N-succinylglutamate 5-semialdehyde dehydrogenase (486 aa).

Gly-220–Gly-225 is an NAD(+) binding site. Residues Glu-243 and Cys-277 contribute to the active site.

This sequence belongs to the aldehyde dehydrogenase family. AstD subfamily.

The catalysed reaction is N-succinyl-L-glutamate 5-semialdehyde + NAD(+) + H2O = N-succinyl-L-glutamate + NADH + 2 H(+). It functions in the pathway amino-acid degradation; L-arginine degradation via AST pathway; L-glutamate and succinate from L-arginine: step 4/5. In terms of biological role, catalyzes the NAD-dependent reduction of succinylglutamate semialdehyde into succinylglutamate. This is N-succinylglutamate 5-semialdehyde dehydrogenase from Shewanella baltica (strain OS155 / ATCC BAA-1091).